The sequence spans 218 residues: Hypoxanthine-guanine phosphoribosyltransferase (218 aa).

At Ala2 the chain carries N-acetylalanine. Lys69 contacts GMP. Lys103 bears the N6-acetyllysine mark. Lys115 is covalently cross-linked (Glycyl lysine isopeptide (Lys-Gly) (interchain with G-Cter in SUMO1); alternate). Lys115 participates in a covalent cross-link: Glycyl lysine isopeptide (Lys-Gly) (interchain with G-Cter in SUMO2); alternate. Residues 134–142 (EDIIDTGKT), Lys166, 186–188 (KFV), and Asp194 contribute to the GMP site. Asp138 (proton acceptor) is an active-site residue. At Thr142 the chain carries Phosphothreonine. Asp194 provides a ligand contact to Mg(2+).

Belongs to the purine/pyrimidine phosphoribosyltransferase family. In terms of assembly, homotetramer. The cofactor is Mg(2+).

It is found in the cytoplasm. The catalysed reaction is IMP + diphosphate = hypoxanthine + 5-phospho-alpha-D-ribose 1-diphosphate. It catalyses the reaction GMP + diphosphate = guanine + 5-phospho-alpha-D-ribose 1-diphosphate. Its pathway is purine metabolism; IMP biosynthesis via salvage pathway; IMP from hypoxanthine: step 1/1. Functionally, converts guanine to guanosine monophosphate, and hypoxanthine to inosine monophosphate. Transfers the 5-phosphoribosyl group from 5-phosphoribosylpyrophosphate onto the purine. Plays a central role in the generation of purine nucleotides through the purine salvage pathway. The protein is Hypoxanthine-guanine phosphoribosyltransferase (HPRT1) of Cricetulus griseus (Chinese hamster).